The following is a 239-amino-acid chain: tRNA (guanine-N(7)-)-methyltransferase (239 aa).

S-adenosyl-L-methionine contacts are provided by E69, E94, D121, and D144. D144 is a catalytic residue. Substrate contacts are provided by residues K148, D180, and 217–220 (TKFE).

The protein belongs to the class I-like SAM-binding methyltransferase superfamily. TrmB family. As to quaternary structure, monomer.

It catalyses the reaction guanosine(46) in tRNA + S-adenosyl-L-methionine = N(7)-methylguanosine(46) in tRNA + S-adenosyl-L-homocysteine. It functions in the pathway tRNA modification; N(7)-methylguanine-tRNA biosynthesis. Catalyzes the formation of N(7)-methylguanine at position 46 (m7G46) in tRNA. The polypeptide is tRNA (guanine-N(7)-)-methyltransferase (Buchnera aphidicola subsp. Acyrthosiphon pisum (strain 5A)).